The chain runs to 147 residues: Hemoglobin subunit beta (147 aa).

Val2 is modified (N-acetylvaline). Positions 3 to 147 constitute a Globin domain; sequence HLSGEEKSAV…VANALAHKYH (145 aa). Thr13 bears the Phosphothreonine mark. Position 45 is a phosphoserine (Ser45). The residue at position 60 (Lys60) is an N6-acetyllysine. Heme b is bound at residue His64. Lys83 carries the post-translational modification N6-acetyllysine. Heme b is bound at residue His93. S-nitrosocysteine is present on Cys94. Lys145 bears the N6-acetyllysine mark.

The protein belongs to the globin family. As to quaternary structure, heterotetramer of two alpha chains and two beta chains. Red blood cells.

Functionally, involved in oxygen transport from the lung to the various peripheral tissues. In Lepus europaeus (European hare), this protein is Hemoglobin subunit beta (HBB).